A 430-amino-acid chain; its full sequence is Signal recognition particle protein (430 aa).

GTP is bound by residues 105–112 (GLQGSGKT), 187–191 (DTAGR), and 245–248 (TKLD).

The protein belongs to the GTP-binding SRP family. SRP54 subfamily. Part of the signal recognition particle protein translocation system, which is composed of SRP and FtsY.

Its subcellular location is the cytoplasm. It catalyses the reaction GTP + H2O = GDP + phosphate + H(+). In terms of biological role, involved in targeting and insertion of nascent membrane proteins into the cytoplasmic membrane. Binds to the hydrophobic signal sequence of the ribosome-nascent chain (RNC) as it emerges from the ribosomes. The SRP-RNC complex is then targeted to the cytoplasmic membrane where it interacts with the SRP receptor FtsY. The chain is Signal recognition particle protein from Thermus aquaticus.